Here is a 61-residue protein sequence, read N- to C-terminus: Potassium channel toxin alpha-KTx 3.18 (61 aa).

A signal peptide spans 1–23 (MKMFFTVLVTLFVCSMIIGICEG). 3 disulfide bridges follow: C30/C50, C36/C55, and C40/C57. Residue K60 is modified to Lysine amide.

In terms of tissue distribution, expressed by the venom gland.

It is found in the secreted. In terms of biological role, inhibits voltage-gated potassium channel rKv1.1/KCNA1 at nanomolar ranges (IC(50)=90 +-2 nM, reduction of current by 30% at 50 nM or toxin). In Mesobuthus eupeus (Lesser Asian scorpion), this protein is Potassium channel toxin alpha-KTx 3.18.